We begin with the raw amino-acid sequence, 437 residues long: 3-phosphoshikimate 1-carboxyvinyltransferase (437 aa).

3 residues coordinate 3-phosphoshikimate: K22, S23, and R27. K22 contacts phosphoenolpyruvate. Phosphoenolpyruvate contacts are provided by G94 and R122. Residues S167, Q169, D314, and K341 each coordinate 3-phosphoshikimate. Q169 is a binding site for phosphoenolpyruvate. Catalysis depends on D314, which acts as the Proton acceptor. Positions 345 and 389 each coordinate phosphoenolpyruvate.

This sequence belongs to the EPSP synthase family. Monomer.

Its subcellular location is the cytoplasm. The enzyme catalyses 3-phosphoshikimate + phosphoenolpyruvate = 5-O-(1-carboxyvinyl)-3-phosphoshikimate + phosphate. The protein operates within metabolic intermediate biosynthesis; chorismate biosynthesis; chorismate from D-erythrose 4-phosphate and phosphoenolpyruvate: step 6/7. In terms of biological role, catalyzes the transfer of the enolpyruvyl moiety of phosphoenolpyruvate (PEP) to the 5-hydroxyl of shikimate-3-phosphate (S3P) to produce enolpyruvyl shikimate-3-phosphate and inorganic phosphate. This Oenococcus oeni (strain ATCC BAA-331 / PSU-1) protein is 3-phosphoshikimate 1-carboxyvinyltransferase.